A 75-amino-acid polypeptide reads, in one-letter code: Protein EGO2 (75 aa).

In Saccharomyces cerevisiae (strain ATCC 204508 / S288c) (Baker's yeast), this protein is Protein EGO2.